Here is a 354-residue protein sequence, read N- to C-terminus: Uroporphyrinogen decarboxylase (354 aa).

Substrate contacts are provided by residues 27 to 31 (RQAGR), D77, Y154, T209, and H327.

This sequence belongs to the uroporphyrinogen decarboxylase family. In terms of assembly, homodimer.

The protein resides in the cytoplasm. The catalysed reaction is uroporphyrinogen III + 4 H(+) = coproporphyrinogen III + 4 CO2. It functions in the pathway porphyrin-containing compound metabolism; protoporphyrin-IX biosynthesis; coproporphyrinogen-III from 5-aminolevulinate: step 4/4. Its function is as follows. Catalyzes the decarboxylation of four acetate groups of uroporphyrinogen-III to yield coproporphyrinogen-III. In Salmonella paratyphi A (strain ATCC 9150 / SARB42), this protein is Uroporphyrinogen decarboxylase.